The following is a 502-amino-acid chain: Maturase K (502 aa).

This sequence belongs to the intron maturase 2 family. MatK subfamily.

The protein localises to the plastid. It localises to the chloroplast. Usually encoded in the trnK tRNA gene intron. Probably assists in splicing its own and other chloroplast group II introns. The chain is Maturase K from Tilia americana (American basswood).